A 639-amino-acid chain; its full sequence is AP2-like ethylene-responsive transcription factor CRL5 (639 aa).

2 disordered regions span residues 25 to 59 and 258 to 277; these read PHMASSTMDEHHHVHHHQQQQQQQQQQQHHQQQQH and GRKRGGAGGGGQKQPVHHRK. Over residues 43–59 the composition is skewed to low complexity; it reads QQQQQQQQQQHHQQQQH. DNA-binding regions (AP2/ERF) lie at residues 288-351 and 387-445; these read QYRG…INFP and MYRG…TNFD. Residues 547-561 are compositionally biased toward low complexity; sequence QQQQQHMSMSAASSL. Residues 547–579 are disordered; that stretch reads QQQQQHMSMSAASSLVTSLSNSREGSPDRGGGL.

The protein belongs to the AP2/ERF transcription factor family. AP2 subfamily. Highly expressed at the base of the stem. Expressed in stems. Expressed a low levels in crown roots and seeds. Expressed in the stem region where adventitious (crown) root initiation occurs.

It is found in the nucleus. Functionally, acts as a positive regulator of adventitious (crown) root formation by promoting its initiation. Promotes adventitious root initiation through repression of cytokinin signaling by positively regulating the two-component response regulator RR1. Regulated by the auxin response factor and transcriptional activator ARF23/ARF1. This chain is AP2-like ethylene-responsive transcription factor CRL5, found in Oryza sativa subsp. japonica (Rice).